We begin with the raw amino-acid sequence, 259 residues long: DNA repair protein RecO (259 aa).

It belongs to the RecO family.

Functionally, involved in DNA repair and RecF pathway recombination. This chain is DNA repair protein RecO, found in Chloroherpeton thalassium (strain ATCC 35110 / GB-78).